The chain runs to 294 residues: uncharacterized protein (294 aa).

3 helical membrane passes run 21–41 (AIVA…TFTF), 51–71 (PIIW…LWAA), and 77–97 (ILFS…VFLF). Residues 156-176 (HPVPFPAEPGSPDPVSPPPPI) are disordered. Residues 184–215 (ERAESLHAGNIELAEDLQRIQEMERNLENERS) are a coiled coil. Over residues 265–277 (QQENESRLEERRF) the composition is skewed to basic and acidic residues. Residues 265–294 (QQENESRLEERRFQSHSTNSLFEADSSRDN) are disordered.

It is found in the mitochondrion membrane. This is an uncharacterized protein from Arabidopsis thaliana (Mouse-ear cress).